We begin with the raw amino-acid sequence, 32 residues long: Dermatoxin-J1 (32 aa).

Glutamine amide is present on Gln32.

As to expression, expressed by the skin glands.

It localises to the secreted. Antimicrobial peptide. This Phasmahyla jandaia (Jandaia leaf frog) protein is Dermatoxin-J1.